Here is a 353-residue protein sequence, read N- to C-terminus: Fe(3+) ions import ATP-binding protein FbpC (353 aa).

In terms of domain architecture, ABC transporter spans 9 to 239 (VTFQNVRKSF…PASSFIADFM (231 aa)). 41 to 48 (GPSGCGKT) is a binding site for ATP.

The protein belongs to the ABC transporter superfamily. Fe(3+) ion importer (TC 3.A.1.10) family. The complex is composed of two ATP-binding proteins (FbpC), two transmembrane proteins (FbpB) and a solute-binding protein (FbpA).

The protein resides in the cell inner membrane. It carries out the reaction Fe(3+)(out) + ATP + H2O = Fe(3+)(in) + ADP + phosphate + H(+). Part of the ABC transporter complex FbpABC involved in Fe(3+) ions import. Responsible for energy coupling to the transport system. The sequence is that of Fe(3+) ions import ATP-binding protein FbpC from Rhizobium etli (strain ATCC 51251 / DSM 11541 / JCM 21823 / NBRC 15573 / CFN 42).